We begin with the raw amino-acid sequence, 567 residues long: Interferon lambda receptor 1 (567 aa).

An N-terminal signal peptide occupies residues 1-22; it reads MSAWRIRVLATLCFLWQPRVHG. Residues 23-229 lie on the Extracellular side of the membrane; the sequence is QLPPPQNVTL…YEGEWKFPFS (207 aa). Positions 26-121 constitute a Fibronectin type-III domain; the sequence is PPQNVTLLSK…KSQFKEYHLD (96 aa). N-linked (GlcNAc...) asparagine glycosylation occurs at N29. 3 disulfide bridges follow: C74–C82, C86–C149, and C193–C215. N141 is a glycosylation site (N-linked (GlcNAc...) asparagine). The helical transmembrane segment at 230-250 threads the bilayer; sequence ATIPVFVLLILLTSASIIWLL. Residues 251–567 are Cytoplasmic-facing; sequence KQDAKHKKMP…YQHSHYMRRS (317 aa).

The protein belongs to the type II cytokine receptor family. As to quaternary structure, heterodimer with IL10RB.

Its subcellular location is the membrane. In terms of biological role, the IFNLR1/IL10RB dimer is a receptor for the cytokine ligands IFNL2 and IFNL3 and mediates their antiviral activity. The ligand/receptor complex stimulate the activation of the JAK/STAT signaling pathway leading to the expression of IFN-stimulated genes (ISG), which contribute to the antiviral state. Determines the cell type specificity of the lambda interferon action. Shows a more restricted pattern of expression in the epithelial tissues thereby limiting responses to lambda interferons primarily to epithelial cells of the respiratory, gastrointestinal, and reproductive tracts. The polypeptide is Interferon lambda receptor 1 (IFNLR1) (Gallus gallus (Chicken)).